A 183-amino-acid polypeptide reads, in one-letter code: Large ribosomal subunit protein uL6 (183 aa).

This sequence belongs to the universal ribosomal protein uL6 family. In terms of assembly, part of the 50S ribosomal subunit.

Its function is as follows. This protein binds to the 23S rRNA, and is important in its secondary structure. It is located near the subunit interface in the base of the L7/L12 stalk, and near the tRNA binding site of the peptidyltransferase center. The chain is Large ribosomal subunit protein uL6 from Parabacteroides distasonis (strain ATCC 8503 / DSM 20701 / CIP 104284 / JCM 5825 / NCTC 11152).